The primary structure comprises 270 residues: F-actin-capping protein subunit beta (270 aa).

The protein belongs to the F-actin-capping protein beta subunit family. As to quaternary structure, component of the F-actin capping complex, composed of a heterodimer of an alpha and a beta subunit.

The protein resides in the cytoplasm. It localises to the cytoskeleton. F-actin-capping proteins bind in a Ca(2+)-independent manner to the fast growing ends of actin filaments (barbed end) thereby blocking the exchange of subunits at these ends. Unlike other capping proteins (such as gelsolin and severin), these proteins do not sever actin filaments. This is F-actin-capping protein subunit beta (cap-2) from Caenorhabditis elegans.